Consider the following 291-residue polypeptide: ATP synthase gamma chain (291 aa).

It belongs to the ATPase gamma chain family. In terms of assembly, F-type ATPases have 2 components, CF(1) - the catalytic core - and CF(0) - the membrane proton channel. CF(1) has five subunits: alpha(3), beta(3), gamma(1), delta(1), epsilon(1). CF(0) has three main subunits: a, b and c.

The protein resides in the cell inner membrane. Produces ATP from ADP in the presence of a proton gradient across the membrane. The gamma chain is believed to be important in regulating ATPase activity and the flow of protons through the CF(0) complex. The protein is ATP synthase gamma chain of Sulfurihydrogenibium sp. (strain YO3AOP1).